Reading from the N-terminus, the 381-residue chain is Creatine kinase B-type (381 aa).

The Phosphagen kinase N-terminal domain maps to 11-98; the sequence is KMKYSVDDEY…FDPVIEDRHG (88 aa). Val-72 contributes to the creatine binding site. Residues 125–367 form the Phosphagen kinase C-terminal domain; sequence YVLSSRVRTG…KLLIEMEKRL (243 aa). ATP contacts are provided by residues 128 to 132, Arg-130, Arg-132, and His-191; that span reads SSRVR. Residue Glu-232 coordinates creatine. Position 236 (Arg-236) interacts with ATP. The residue at position 282 (Thr-282) is a Phosphothreonine; by autocatalysis. A creatine-binding site is contributed by Ser-285. At Ser-285 the chain carries Phosphoserine; by autocatalysis. Thr-289 carries the post-translational modification Phosphothreonine; by autocatalysis. ATP is bound by residues Arg-292, Arg-320, 320–325, and Asp-335; that span reads RGTGGV.

The protein belongs to the ATP:guanido phosphotransferase family. Dimer of identical or non-identical chains, which can be either B (brain type) or M (muscle type). With MM being the major form in skeletal muscle and myocardium, MB existing in myocardium, and BB existing in many tissues, especially brain. In terms of processing, ba-CK and Bb-CK are phosphorylated. Post-translationally, the N-terminus of BA-CK is blocked. Expressed in almost all tissues and found enriched in various region of the brain, retina, heart, gizzard, gut and sperm.

The protein localises to the cytoplasm. The protein resides in the cytosol. Its subcellular location is the mitochondrion. It is found in the cell membrane. The enzyme catalyses creatine + ATP = N-phosphocreatine + ADP + H(+). Functionally, reversibly catalyzes the transfer of phosphate between ATP and various phosphogens (e.g. creatine phosphate). Creatine kinase isoenzymes play a central role in energy transduction in tissues with large, fluctuating energy demands, such as skeletal muscle, heart, brain and spermatozoa. This is Creatine kinase B-type from Gallus gallus (Chicken).